The sequence spans 605 residues: MATTTSHATNTWIKTKLSMPSSKEFGFASNSISLLKNQHNRQSLNINSSLQAPPILHFPKQSSNYQTPKNNTISHPKQENNNSSSSSTSKWNLVQKAAAMALDAVESALTKHELEHPLPKTADPRVQISGNFAPVPENPVCQSLPVTGKIPKCVQGVYVRNGANPLFEPTAGHHFFDGDGMVHAVQFKNGSASYACRFTETERLVQEKALGRPVFPKAIGELHGHSGIARLMLFYARGLFGLVDHSKGTGVANAGLVYFNNRLLAMSEDDLPYHVKVTPTGDLKTEGRFDFDGQLKSTMIAHPKLDPVSGELFALSYDVIQKPYLKYFRFSKNGEKSNDVEIPVEDPTMMHDFAITENFVVIPDQQVVFKMSEMIRGGSPVVYDKNKVSRFGILDKYAKDGSDLKWVEVPDCFCFHLWNAWEEAETDEIVVIGSCMTPPDSIFNECDEGLKSVLSEIRLNLKTGKSTRKSIIENPDEQVNLEAGMVNRNKLGRKTEYAYLAIAEPWPKVSGFAKVNLFTGEVEKFIYGDNKYGGEPLFLPRDPNSKEEDDGYILAFVHDEKEWKSELQIVNAMSLKLEATVKLPSRVPYGFHGTFINANDLANQA.

Residues 1-16 constitute a chloroplast transit peptide; it reads MATTTSHATNTWIKTK. The tract at residues 55 to 89 is disordered; the sequence is ILHFPKQSSNYQTPKNNTISHPKQENNNSSSSSTS. Over residues 60-75 the composition is skewed to polar residues; it reads KQSSNYQTPKNNTISH. Residues 80-89 are compositionally biased toward low complexity; sequence NNNSSSSSTS. Residues His302, His351, His416, and His592 each contribute to the Fe cation site.

Belongs to the carotenoid oxygenase family. Fe(2+) serves as cofactor. In terms of tissue distribution, expressed in developing and ripening fruits. Highly expressed in pulp. Observed in unpollinated ovaries (e.g. ovules, placenta and pericarp). Expressed in flowers.

Its subcellular location is the plastid. The protein localises to the chloroplast stroma. The catalysed reaction is a 9-cis-epoxycarotenoid + O2 = a 12'-apo-carotenal + 2-cis,4-trans-xanthoxin. It catalyses the reaction 9-cis-violaxanthin + O2 = (3S,5R,6S)-5,6-epoxy-3-hydroxy-5,6-dihydro-12'-apo-beta-caroten-12'-al + 2-cis,4-trans-xanthoxin. It carries out the reaction 9'-cis-neoxanthin + O2 = (3S,5R,6R)-3,5-dihydroxy-6,7-didehydro-5,6-dihydro-12'-apo-beta-caroten-12'-al + 2-cis,4-trans-xanthoxin. Its pathway is plant hormone biosynthesis; abscisate biosynthesis. Has a 11,12(11',12') 9-cis epoxycarotenoid cleavage activity. Catalyzes the first step of abscisic-acid (ABA) biosynthesis from carotenoids. Required for ABA accumulation upon drought. Required for ABA-mediated regulation of anther/pollen development, including metabolism, cell wall modification and transcription level. Positive regulator of fruit ripening involved in the biosynthesis of abscisic acid (ABA); initiates ABA biosynthesis at the onset of fruit ripening. Modulates the degree of pigmentation and carotenoid composition as well as pectin catabolism during ripening and may regulate the ethylene production and action in climacteric tomato fruit. The polypeptide is 9-cis-epoxycarotenoid dioxygenase NCED1, chloroplastic (Solanum lycopersicum (Tomato)).